A 657-amino-acid chain; its full sequence is Methionine--tRNA ligase (657 aa).

The 'HIGH' region motif lies at 13 to 23; sequence YYPSGNLHIGH. The 'KMSKS' region motif lies at 308 to 312; the sequence is KMSKS. Position 311 (lysine 311) interacts with ATP. One can recognise a tRNA-binding domain in the interval 557-657; sequence DFDKVEIKAA…SAIPNGAVIK (101 aa).

The protein belongs to the class-I aminoacyl-tRNA synthetase family. MetG type 2B subfamily. As to quaternary structure, homodimer.

Its subcellular location is the cytoplasm. The enzyme catalyses tRNA(Met) + L-methionine + ATP = L-methionyl-tRNA(Met) + AMP + diphosphate. Its function is as follows. Is required not only for elongation of protein synthesis but also for the initiation of all mRNA translation through initiator tRNA(fMet) aminoacylation. The sequence is that of Methionine--tRNA ligase from Staphylococcus aureus (strain MW2).